The chain runs to 37 residues: Large ribosomal subunit protein bL36 (37 aa).

This sequence belongs to the bacterial ribosomal protein bL36 family.

This chain is Large ribosomal subunit protein bL36, found in Desulfitobacterium hafniense (strain Y51).